Reading from the N-terminus, the 106-residue chain is Programmed cell death activator egl-1 (106 aa).

Positions 73–81 (LAAMCDDFD) are BH3-like.

In terms of assembly, interacts with ced-9; the interaction results in ced-4 release from the ced-4/ced-9 complex. Interaction with ced-9 may enhance interaction of ced-9 with drp-1, but not with ced-4. A ced-9/egl-1 complex may recruit drp-1 to the mitochondrial surface.

Its subcellular location is the synapse. In terms of biological role, plays a major role in programmed cell death (PCD or apoptosis) by negatively regulating ced-9. Binds to and directly inhibits the activity of ced-9, releasing the cell death activator ced-4 from a ced-9/ced-4 containing protein complex and allowing ced-4 to activate the cell-killing caspase ced-3. Required to activate programmed cell death in the sister cells of the serotonergic neurosecretory motor (NSM) neurons during embryogenesis. Required to activate programmed cell death in the sister cells of the M4 motor neuron and I1 pharyngeal neuron during embryogenesis. During larval development, required for the elimination of transient presynaptic components upstream of ced-9, ced-4 and ced-3 apoptotic pathway. Together with ain-1, a component of the miRNA-induced-silencing complex (miRISC), and probably upstream of ced-3 and ced-4, regulates temporal cell fate patterning during larval development. Has been shown in two studies to be dispensable in mitochondrial dynamics and morphology during early embryonic development. However, one study shows that during larval development, egl-1 is involved in modulating mitochondrial dynamics, perhaps acting by stabilizing the interaction between ced-9 and drp-1 in order to promote mitochondrial fission. Involved in inducing mitochondrial fragmentation during apoptosis, probably acting via ced-9 and dynamin-related protein drp-1. This chain is Programmed cell death activator egl-1, found in Caenorhabditis elegans.